We begin with the raw amino-acid sequence, 256 residues long: Hydroxyacylglutathione hydrolase (256 aa).

Histidine 53, histidine 55, aspartate 57, histidine 58, histidine 111, aspartate 128, and histidine 166 together coordinate Zn(2+).

This sequence belongs to the metallo-beta-lactamase superfamily. Glyoxalase II family. In terms of assembly, monomer. Zn(2+) serves as cofactor.

The catalysed reaction is an S-(2-hydroxyacyl)glutathione + H2O = a 2-hydroxy carboxylate + glutathione + H(+). It functions in the pathway secondary metabolite metabolism; methylglyoxal degradation; (R)-lactate from methylglyoxal: step 2/2. Functionally, thiolesterase that catalyzes the hydrolysis of S-D-lactoyl-glutathione to form glutathione and D-lactic acid. In Thiobacillus denitrificans (strain ATCC 25259 / T1), this protein is Hydroxyacylglutathione hydrolase.